A 206-amino-acid chain; its full sequence is Small ribosomal subunit protein uS4 (206 aa).

The 61-residue stretch at 96-156 (GRLDNVVYRM…EKSKKQARIK (61 aa)) folds into the S4 RNA-binding domain.

This sequence belongs to the universal ribosomal protein uS4 family. Part of the 30S ribosomal subunit. Contacts protein S5. The interaction surface between S4 and S5 is involved in control of translational fidelity.

One of the primary rRNA binding proteins, it binds directly to 16S rRNA where it nucleates assembly of the body of the 30S subunit. Functionally, with S5 and S12 plays an important role in translational accuracy. This is Small ribosomal subunit protein uS4 from Pasteurella multocida (strain Pm70).